A 341-amino-acid polypeptide reads, in one-letter code: UDP-3-O-acylglucosamine N-acyltransferase (341 aa).

H255 (proton acceptor) is an active-site residue.

It belongs to the transferase hexapeptide repeat family. LpxD subfamily. In terms of assembly, homotrimer.

The catalysed reaction is a UDP-3-O-[(3R)-3-hydroxyacyl]-alpha-D-glucosamine + a (3R)-hydroxyacyl-[ACP] = a UDP-2-N,3-O-bis[(3R)-3-hydroxyacyl]-alpha-D-glucosamine + holo-[ACP] + H(+). It participates in bacterial outer membrane biogenesis; LPS lipid A biosynthesis. Functionally, catalyzes the N-acylation of UDP-3-O-acylglucosamine using 3-hydroxyacyl-ACP as the acyl donor. Is involved in the biosynthesis of lipid A, a phosphorylated glycolipid that anchors the lipopolysaccharide to the outer membrane of the cell. The sequence is that of UDP-3-O-acylglucosamine N-acyltransferase from Granulibacter bethesdensis (strain ATCC BAA-1260 / CGDNIH1).